The chain runs to 214 residues: Thymidylate kinase (214 aa).

15 to 22 (GLEGAGKT) contributes to the ATP binding site.

Belongs to the thymidylate kinase family.

It catalyses the reaction dTMP + ATP = dTDP + ADP. Functionally, phosphorylation of dTMP to form dTDP in both de novo and salvage pathways of dTTP synthesis. The polypeptide is Thymidylate kinase (Haemophilus ducreyi (strain 35000HP / ATCC 700724)).